Reading from the N-terminus, the 638-residue chain is 1-deoxy-D-xylulose-5-phosphate synthase (638 aa).

Residues H79 and 120–122 (AHS) each bind thiamine diphosphate. D151 is a Mg(2+) binding site. Thiamine diphosphate contacts are provided by residues 152–153 (GA), N180, Y289, and E371. N180 provides a ligand contact to Mg(2+).

This sequence belongs to the transketolase family. DXPS subfamily. Homodimer. It depends on Mg(2+) as a cofactor. The cofactor is thiamine diphosphate.

The catalysed reaction is D-glyceraldehyde 3-phosphate + pyruvate + H(+) = 1-deoxy-D-xylulose 5-phosphate + CO2. The protein operates within metabolic intermediate biosynthesis; 1-deoxy-D-xylulose 5-phosphate biosynthesis; 1-deoxy-D-xylulose 5-phosphate from D-glyceraldehyde 3-phosphate and pyruvate: step 1/1. Its function is as follows. Catalyzes the acyloin condensation reaction between C atoms 2 and 3 of pyruvate and glyceraldehyde 3-phosphate to yield 1-deoxy-D-xylulose-5-phosphate (DXP). The sequence is that of 1-deoxy-D-xylulose-5-phosphate synthase from Rhizobium etli (strain ATCC 51251 / DSM 11541 / JCM 21823 / NBRC 15573 / CFN 42).